Consider the following 498-residue polypeptide: ATP synthase subunit beta, chloroplastic (498 aa).

172–179 (GGAGVGKT) is a binding site for ATP.

The protein belongs to the ATPase alpha/beta chains family. As to quaternary structure, F-type ATPases have 2 components, CF(1) - the catalytic core - and CF(0) - the membrane proton channel. CF(1) has five subunits: alpha(3), beta(3), gamma(1), delta(1), epsilon(1). CF(0) has four main subunits: a(1), b(1), b'(1) and c(9-12).

The protein localises to the plastid. The protein resides in the chloroplast thylakoid membrane. It catalyses the reaction ATP + H2O + 4 H(+)(in) = ADP + phosphate + 5 H(+)(out). Functionally, produces ATP from ADP in the presence of a proton gradient across the membrane. The catalytic sites are hosted primarily by the beta subunits. The polypeptide is ATP synthase subunit beta, chloroplastic (Idiospermum australiense (Ribbonwood tree)).